Here is a 385-residue protein sequence, read N- to C-terminus: 1-deoxy-D-xylulose 5-phosphate reductoisomerase (385 aa).

Thr10, Gly11, Ser12, Ile13, Lys37, and Asn124 together coordinate NADPH. Lys125 lines the 1-deoxy-D-xylulose 5-phosphate pocket. Residue Glu126 participates in NADPH binding. Asp150 contacts Mn(2+). Ser151, Glu152, Ser176, and His199 together coordinate 1-deoxy-D-xylulose 5-phosphate. Glu152 is a Mn(2+) binding site. Gly205 provides a ligand contact to NADPH. 1-deoxy-D-xylulose 5-phosphate-binding residues include Ser212, Asn217, Lys218, and Glu221. Glu221 serves as a coordination point for Mn(2+).

This sequence belongs to the DXR family. The cofactor is Mg(2+). It depends on Mn(2+) as a cofactor.

The enzyme catalyses 2-C-methyl-D-erythritol 4-phosphate + NADP(+) = 1-deoxy-D-xylulose 5-phosphate + NADPH + H(+). The protein operates within isoprenoid biosynthesis; isopentenyl diphosphate biosynthesis via DXP pathway; isopentenyl diphosphate from 1-deoxy-D-xylulose 5-phosphate: step 1/6. Functionally, catalyzes the NADPH-dependent rearrangement and reduction of 1-deoxy-D-xylulose-5-phosphate (DXP) to 2-C-methyl-D-erythritol 4-phosphate (MEP). This Clostridium botulinum (strain ATCC 19397 / Type A) protein is 1-deoxy-D-xylulose 5-phosphate reductoisomerase.